A 99-amino-acid chain; its full sequence is Integration host factor subunit alpha (99 aa).

This sequence belongs to the bacterial histone-like protein family. Heterodimer of an alpha and a beta chain.

Functionally, this protein is one of the two subunits of integration host factor, a specific DNA-binding protein that functions in genetic recombination as well as in transcriptional and translational control. This chain is Integration host factor subunit alpha, found in Psychrobacter cryohalolentis (strain ATCC BAA-1226 / DSM 17306 / VKM B-2378 / K5).